Reading from the N-terminus, the 269-residue chain is MSRIADTFAELQSKGRKALIPYVTAGFPFVDITPALMHGMVEAGADVIELGVPFSDPMADGPVIQKAGEKALALGVGLAQVLEMVRRFRLRNSTTPVVLMGYANPVERYEQRHGKGAFARDAGEAGVDGVLIVDYPPEECEQFAADLRGHGIDLIFLLAPTSTPERMQQVARVASGYVYYVSLKGVTGSGALDTAAVEAMLPRIREHVKVPVGVGFGIRDAATAQAIGRVADAVVIGSRIIQLIEDQPHEKVVGITVDFLRGVRKALDA.

Residues Glu-49 and Asp-60 each act as proton acceptor in the active site.

This sequence belongs to the TrpA family. In terms of assembly, tetramer of two alpha and two beta chains.

It catalyses the reaction (1S,2R)-1-C-(indol-3-yl)glycerol 3-phosphate + L-serine = D-glyceraldehyde 3-phosphate + L-tryptophan + H2O. Its pathway is amino-acid biosynthesis; L-tryptophan biosynthesis; L-tryptophan from chorismate: step 5/5. Functionally, the alpha subunit is responsible for the aldol cleavage of indoleglycerol phosphate to indole and glyceraldehyde 3-phosphate. The protein is Tryptophan synthase alpha chain of Acidovorax sp. (strain JS42).